The primary structure comprises 487 residues: Protein nucleotidyltransferase YdiU (487 aa).

Glycine 90, glycine 92, arginine 93, lysine 113, aspartate 125, glycine 126, arginine 176, and arginine 183 together coordinate ATP. Aspartate 252 functions as the Proton acceptor in the catalytic mechanism. Mg(2+) is bound by residues asparagine 253 and aspartate 262. Residue aspartate 262 participates in ATP binding.

The protein belongs to the SELO family. Mg(2+) serves as cofactor. Requires Mn(2+) as cofactor.

It carries out the reaction L-seryl-[protein] + ATP = 3-O-(5'-adenylyl)-L-seryl-[protein] + diphosphate. The catalysed reaction is L-threonyl-[protein] + ATP = 3-O-(5'-adenylyl)-L-threonyl-[protein] + diphosphate. The enzyme catalyses L-tyrosyl-[protein] + ATP = O-(5'-adenylyl)-L-tyrosyl-[protein] + diphosphate. It catalyses the reaction L-histidyl-[protein] + UTP = N(tele)-(5'-uridylyl)-L-histidyl-[protein] + diphosphate. It carries out the reaction L-seryl-[protein] + UTP = O-(5'-uridylyl)-L-seryl-[protein] + diphosphate. The catalysed reaction is L-tyrosyl-[protein] + UTP = O-(5'-uridylyl)-L-tyrosyl-[protein] + diphosphate. Its function is as follows. Nucleotidyltransferase involved in the post-translational modification of proteins. It can catalyze the addition of adenosine monophosphate (AMP) or uridine monophosphate (UMP) to a protein, resulting in modifications known as AMPylation and UMPylation. The chain is Protein nucleotidyltransferase YdiU from Pseudomonas savastanoi pv. phaseolicola (strain 1448A / Race 6) (Pseudomonas syringae pv. phaseolicola (strain 1448A / Race 6)).